The primary structure comprises 123 residues: Large ribosomal subunit protein bL19 (123 aa).

It belongs to the bacterial ribosomal protein bL19 family.

Functionally, this protein is located at the 30S-50S ribosomal subunit interface and may play a role in the structure and function of the aminoacyl-tRNA binding site. The sequence is that of Large ribosomal subunit protein bL19 from Acinetobacter baylyi (strain ATCC 33305 / BD413 / ADP1).